The chain runs to 338 residues: DNA-directed RNA polymerase subunit alpha (338 aa).

The tract at residues methionine 1 to glutamate 234 is alpha N-terminal domain (alpha-NTD). Positions phenylalanine 250–phenylalanine 338 are alpha C-terminal domain (alpha-CTD).

It belongs to the RNA polymerase alpha chain family. As to quaternary structure, homodimer. The RNAP catalytic core consists of 2 alpha, 1 beta, 1 beta' and 1 omega subunit. When a sigma factor is associated with the core the holoenzyme is formed, which can initiate transcription.

The catalysed reaction is RNA(n) + a ribonucleoside 5'-triphosphate = RNA(n+1) + diphosphate. In terms of biological role, DNA-dependent RNA polymerase catalyzes the transcription of DNA into RNA using the four ribonucleoside triphosphates as substrates. The polypeptide is DNA-directed RNA polymerase subunit alpha (Roseobacter denitrificans (strain ATCC 33942 / OCh 114) (Erythrobacter sp. (strain OCh 114))).